The chain runs to 474 residues: tRNA-2-methylthio-N(6)-dimethylallyladenosine synthase (474 aa).

Residues lysine 3 to glycine 120 form the MTTase N-terminal domain. [4Fe-4S] cluster contacts are provided by cysteine 12, cysteine 49, cysteine 83, cysteine 157, cysteine 161, and cysteine 164. Residues arginine 143–alanine 375 form the Radical SAM core domain. The TRAM domain maps to arginine 378 to arginine 441.

The protein belongs to the methylthiotransferase family. MiaB subfamily. Monomer. It depends on [4Fe-4S] cluster as a cofactor.

It localises to the cytoplasm. It catalyses the reaction N(6)-dimethylallyladenosine(37) in tRNA + (sulfur carrier)-SH + AH2 + 2 S-adenosyl-L-methionine = 2-methylsulfanyl-N(6)-dimethylallyladenosine(37) in tRNA + (sulfur carrier)-H + 5'-deoxyadenosine + L-methionine + A + S-adenosyl-L-homocysteine + 2 H(+). Its function is as follows. Catalyzes the methylthiolation of N6-(dimethylallyl)adenosine (i(6)A), leading to the formation of 2-methylthio-N6-(dimethylallyl)adenosine (ms(2)i(6)A) at position 37 in tRNAs that read codons beginning with uridine. This is tRNA-2-methylthio-N(6)-dimethylallyladenosine synthase from Salmonella paratyphi A (strain ATCC 9150 / SARB42).